A 103-amino-acid chain; its full sequence is Putative defensin-like protein 305 (103 aa).

The first 31 residues, methionine 1 to cysteine 31, serve as a signal peptide directing secretion. Cystine bridges form between cysteine 31/cysteine 51, cysteine 37/cysteine 56, and cysteine 42/cysteine 58.

Belongs to the DEFL family.

The protein resides in the secreted. This is Putative defensin-like protein 305 from Arabidopsis thaliana (Mouse-ear cress).